We begin with the raw amino-acid sequence, 419 residues long: Phospholipase A1-IIgamma (419 aa).

2 coiled-coil regions span residues 1-21 and 207-227; these read MKRKKKEEEEEKLIVTREFAK and NARDQVLREVGRLLEKYKDEE. Residue S236 is the Acyl-ester intermediate of the active site. Catalysis depends on charge relay system residues S236, D302, and H339.

The protein belongs to the AB hydrolase superfamily. Lipase family. As to expression, expressed in seedlings, stems and siliques, and, to a lower extent, in flowers.

It localises to the cytoplasm. Its function is as follows. Acylhydrolase that catalyzes the hydrolysis of 1,3-diacylglycerol (1,3-DAG) and 1-monoacylglycerol (1-MAG) at the sn-1 position. High activity toward 1,3-DAG and 1-MAG, but low activity toward 1,2-diacylglycerol (1,2-DAG) and 1-lysophosphatidylcholine (1-LPC), and no activity toward phosphatidylcholine (PC), monogalactosyldiacylglycerol (MGDG), digalactosyldiacylglycerol (DGDG), triacylglycerol (TAG) and 2-monoacylglycerol (2-MAG). May be involved in the negative regulation of seedling establishment by inhibiting the breakdown, beta-oxidation and mobilization of seed storage oils. The sequence is that of Phospholipase A1-IIgamma (DSEL) from Arabidopsis thaliana (Mouse-ear cress).